The sequence spans 337 residues: Pentalenene synthase (337 aa).

Mg(2+) contacts are provided by Asp-80, Asp-84, Asn-219, Ser-223, and Glu-227. A DDXXD motif motif is present at residues 80–84 (DDLFD).

The protein belongs to the terpene synthase family. Monomer. It depends on Mg(2+) as a cofactor.

The enzyme catalyses (2E,6E)-farnesyl diphosphate = pentalenene + diphosphate. It functions in the pathway sesquiterpene biosynthesis; pentalenene biosynthesis; pentalenene from farnesyl diphosphate: step 1/1. Its pathway is antibiotic biosynthesis; pentalenolactone biosynthesis. Functionally, catalyzes the cyclization of farnesyl diphosphate (FPP) to the tricyclic sesquiterpene pentalenene, which is the hydrocarbon precursor of the pentalenolactone family of antibiotics produced by a variety of Streptomyces species. This Streptomyces arenae protein is Pentalenene synthase (pntA).